Reading from the N-terminus, the 548-residue chain is Protein GPR108 (548 aa).

Positions 1–32 (MAVSERRGLGRGSPAEWGPWLLLLLLLGGSSG) are cleaved as a signal peptide. Asn57, Asn63, and Asn109 each carry an N-linked (GlcNAc...) asparagine glycan. The interval 165 to 190 (DHAGTTAAPDKAKSKPTGLQGDRQGV) is disordered. 2 N-linked (GlcNAc...) asparagine glycosylation sites follow: Asn205 and Asn209. 7 consecutive transmembrane segments (helical) span residues 268 to 288 (LYMVMSACFLGAGIFWVSILC), 297 to 317 (IHWLMAALTFTKSVSLLFHSI), 341 to 361 (LLKGALLFITIALIGSGWAFV), 372 to 392 (IFGIVIPLQVLANVAYIVMES), 406 to 426 (ILFLVDLICCGTILFPVVWSI), 454 to 474 (VMVICYIYFTRIIAILLRAVV), and 478 to 498 (WQWLYQLLVEGSTLAFFVLTG). Asn539 is a glycosylation site (N-linked (GlcNAc...) asparagine).

Belongs to the LU7TM family.

It is found in the golgi apparatus. The protein localises to the cis-Golgi network membrane. Its subcellular location is the trans-Golgi network membrane. The protein resides in the golgi apparatus membrane. May play a role in intracellular immune modulation by activating NF-kappaB response and attenuating Toll-like-receptor response. The protein is Protein GPR108 (GPR108) of Bos taurus (Bovine).